The sequence spans 266 residues: Translation initiation factor 2 subunit alpha (266 aa).

One can recognise an S1 motif domain in the interval 12–83 (GEILIATVKQ…RKGTVDVSLK (72 aa)).

Belongs to the eIF-2-alpha family. Heterotrimer composed of an alpha, a beta and a gamma chain.

In terms of biological role, eIF-2 functions in the early steps of protein synthesis by forming a ternary complex with GTP and initiator tRNA. The chain is Translation initiation factor 2 subunit alpha from Saccharolobus islandicus (strain M.16.27) (Sulfolobus islandicus).